A 216-amino-acid polypeptide reads, in one-letter code: Redox-sensing transcriptional repressor Rex (216 aa).

A DNA-binding region (H-T-H motif) is located at residues 15 to 54; the sequence is KYLRVTQQLIEEGRDAVSSKELGDFTGINPVQVRRDLNAI. NAD(+) is bound at residue 89–94; it reads GAGNLG.

The protein belongs to the transcriptional regulatory Rex family. Homodimer.

It localises to the cytoplasm. Functionally, modulates transcription in response to changes in cellular NADH/NAD(+) redox state. The chain is Redox-sensing transcriptional repressor Rex from Rubrobacter xylanophilus (strain DSM 9941 / JCM 11954 / NBRC 16129 / PRD-1).